A 442-amino-acid polypeptide reads, in one-letter code: Exodeoxyribonuclease 7 large subunit (442 aa).

It belongs to the XseA family. As to quaternary structure, heterooligomer composed of large and small subunits.

The protein localises to the cytoplasm. The enzyme catalyses Exonucleolytic cleavage in either 5'- to 3'- or 3'- to 5'-direction to yield nucleoside 5'-phosphates.. In terms of biological role, bidirectionally degrades single-stranded DNA into large acid-insoluble oligonucleotides, which are then degraded further into small acid-soluble oligonucleotides. The polypeptide is Exodeoxyribonuclease 7 large subunit (Shewanella sediminis (strain HAW-EB3)).